A 121-amino-acid chain; its full sequence is Large ribosomal subunit protein bL12 (121 aa).

It belongs to the bacterial ribosomal protein bL12 family. As to quaternary structure, homodimer. Part of the ribosomal stalk of the 50S ribosomal subunit. Forms a multimeric L10(L12)X complex, where L10 forms an elongated spine to which 2 to 4 L12 dimers bind in a sequential fashion. Binds GTP-bound translation factors.

Forms part of the ribosomal stalk which helps the ribosome interact with GTP-bound translation factors. Is thus essential for accurate translation. The sequence is that of Large ribosomal subunit protein bL12 from Pseudomonas fluorescens (strain Pf0-1).